Reading from the N-terminus, the 174-residue chain is Large ribosomal subunit protein uL16 (174 aa).

This sequence belongs to the universal ribosomal protein uL16 family.

This Staphylothermus marinus (strain ATCC 43588 / DSM 3639 / JCM 9404 / F1) protein is Large ribosomal subunit protein uL16.